The primary structure comprises 158 residues: RNA pyrophosphohydrolase (158 aa).

In terms of domain architecture, Nudix hydrolase spans 9–151 (PLRNGVGIVV…KLHVYKDVKE (143 aa)). Residues 43 to 64 (GGVDKGEDYLTAAYRELEEETS) carry the Nudix box motif.

The protein belongs to the Nudix hydrolase family. RppH subfamily. The cofactor is a divalent metal cation.

In terms of biological role, accelerates the degradation of transcripts by removing pyrophosphate from the 5'-end of triphosphorylated RNA, leading to a more labile monophosphorylated state that can stimulate subsequent ribonuclease cleavage. The protein is RNA pyrophosphohydrolase of Pelagibacter ubique (strain HTCC1062).